Reading from the N-terminus, the 518-residue chain is Protein nucleotidyltransferase YdiU (518 aa).

Residues G99, G101, R102, K122, D134, G135, R192, and R199 each coordinate ATP. The active-site Proton acceptor is D270. Residues N271 and D280 each coordinate Mg(2+). Residue D280 coordinates ATP.

Belongs to the SELO family. Mg(2+) is required as a cofactor. It depends on Mn(2+) as a cofactor.

The enzyme catalyses L-seryl-[protein] + ATP = 3-O-(5'-adenylyl)-L-seryl-[protein] + diphosphate. It carries out the reaction L-threonyl-[protein] + ATP = 3-O-(5'-adenylyl)-L-threonyl-[protein] + diphosphate. The catalysed reaction is L-tyrosyl-[protein] + ATP = O-(5'-adenylyl)-L-tyrosyl-[protein] + diphosphate. It catalyses the reaction L-histidyl-[protein] + UTP = N(tele)-(5'-uridylyl)-L-histidyl-[protein] + diphosphate. The enzyme catalyses L-seryl-[protein] + UTP = O-(5'-uridylyl)-L-seryl-[protein] + diphosphate. It carries out the reaction L-tyrosyl-[protein] + UTP = O-(5'-uridylyl)-L-tyrosyl-[protein] + diphosphate. In terms of biological role, nucleotidyltransferase involved in the post-translational modification of proteins. It can catalyze the addition of adenosine monophosphate (AMP) or uridine monophosphate (UMP) to a protein, resulting in modifications known as AMPylation and UMPylation. The protein is Protein nucleotidyltransferase YdiU of Methylobacillus flagellatus (strain ATCC 51484 / DSM 6875 / VKM B-1610 / KT).